We begin with the raw amino-acid sequence, 880 residues long: Interference hedgehog (880 aa).

The first 20 residues, 1–20 (MTLLTSSLLLFSLLTSRLEA), serve as a signal peptide directing secretion. Topologically, residues 21–703 (IPVLEKSPAH…ETFNMSPMLT (683 aa)) are extracellular. Ig-like C2-type domains follow at residues 45 to 142 (PGVR…TARL), 155 to 232 (PESP…ERIQ), 252 to 340 (PHLL…YIKV), and 346 to 432 (PQIV…LQVN). 4 cysteine pairs are disulfide-bonded: cysteine 68–cysteine 126, cysteine 173–cysteine 220, cysteine 276–cysteine 324, and cysteine 367–cysteine 414. N-linked (GlcNAc...) asparagine glycans are attached at residues asparagine 102 and asparagine 209. Positions 429-467 (LQVNPKQIQEPRESGGTHRPNPNQGSKHKQMYPPTPPNV) are disordered. Fibronectin type-III domains follow at residues 461 to 567 (PPTP…LQPG) and 575 to 670 (VPEL…TQRP). Asparagine 466 carries N-linked (GlcNAc...) asparagine glycosylation. Positions 497, 501, 503, and 541 each coordinate heparin. A glycan (N-linked (GlcNAc...) asparagine) is linked at asparagine 557. A disordered region spans residues 662–692 (LKQGRTQRPKTSTTEEPTLQMGDRDTTTPSH). Over residues 665–678 (GRTQRPKTSTTEEP) the composition is skewed to polar residues. N-linked (GlcNAc...) asparagine glycosylation occurs at asparagine 693. The chain crosses the membrane as a helical span at residues 704 to 724 (GTIGGGAVLILLLISTCLCVC). The Cytoplasmic segment spans residues 725–880 (RRRNSRSRGN…SSGSLNSVGV (156 aa)). 2 disordered regions span residues 728–762 (NSRS…QRQR) and 775–880 (QQQQ…SVGV). Low complexity-rich tracts occupy residues 823-837 (RAGG…NNNN) and 864-880 (SSRS…SVGV).

Belongs to the immunoglobulin superfamily. IHOG family. As to quaternary structure, homodimer. Heterotetramer; 2 iHog chains bind 2 hh chains when facilitated by heparin, heparin is required to promote high-affinity interactions between hh and iHog.

The protein localises to the membrane. Mediates response to the active Hedgehog (Hh) protein signal in embryos, functioning upstream or at the level of patched (ptc). This Drosophila simulans (Fruit fly) protein is Interference hedgehog.